Here is a 373-residue protein sequence, read N- to C-terminus: tRNA N6-adenosine threonylcarbamoyltransferase (373 aa).

Residues His128, His132, and Tyr149 each contribute to the a divalent metal cation site. Residues 149–153 (YVSGG), Asp181, Gly196, Glu200, and Asn302 each bind substrate. Asp331 lines the a divalent metal cation pocket.

Belongs to the KAE1 / TsaD family. In terms of assembly, component of the EKC/KEOPS complex composed of at least BUD32, CGI121, GON7, KAE1 and PCC1; the whole complex dimerizes. Requires a divalent metal cation as cofactor.

It localises to the cytoplasm. It is found in the nucleus. The enzyme catalyses L-threonylcarbamoyladenylate + adenosine(37) in tRNA = N(6)-L-threonylcarbamoyladenosine(37) in tRNA + AMP + H(+). Its function is as follows. Component of the EKC/KEOPS complex that is required for the formation of a threonylcarbamoyl group on adenosine at position 37 (t(6)A37) in tRNAs that read codons beginning with adenine. The complex is probably involved in the transfer of the threonylcarbamoyl moiety of threonylcarbamoyl-AMP (TC-AMP) to the N6 group of A37. KAE1 likely plays a direct catalytic role in this reaction, but requires other protein(s) of the complex to fulfill this activity. The EKC/KEOPS complex also promotes both telomere uncapping and telomere elongation. The complex is required for efficient recruitment of transcriptional coactivators. The chain is tRNA N6-adenosine threonylcarbamoyltransferase from Candida glabrata (strain ATCC 2001 / BCRC 20586 / JCM 3761 / NBRC 0622 / NRRL Y-65 / CBS 138) (Yeast).